We begin with the raw amino-acid sequence, 558 residues long: Magnesium-chelatase 60 kDa subunit (558 aa).

2 disordered regions span residues 234–268 (MPAS…GEEM) and 298–325 (MARG…MGRL). Positions 240-254 (APPEPEPEPPEDQPD) are enriched in acidic residues. Low complexity predominate over residues 298–308 (MARGATGTGSA). A VWFA domain is found at 376–555 (VLIFAVDASG…HKLSNVLGAA (180 aa)).

The protein belongs to the Mg-chelatase subunits D/I family.

It catalyses the reaction protoporphyrin IX + Mg(2+) + ATP + H2O = Mg-protoporphyrin IX + ADP + phosphate + 3 H(+). It participates in porphyrin-containing compound metabolism; bacteriochlorophyll biosynthesis. Its function is as follows. Involved in bacteriochlorophyll biosynthesis; introduces a magnesium ion into protoporphyrin IX to yield Mg-protoporphyrin IX. This is Magnesium-chelatase 60 kDa subunit (bchD) from Cereibacter sphaeroides (strain ATCC 17023 / DSM 158 / JCM 6121 / CCUG 31486 / LMG 2827 / NBRC 12203 / NCIMB 8253 / ATH 2.4.1.) (Rhodobacter sphaeroides).